We begin with the raw amino-acid sequence, 260 residues long: Voltage-dependent calcium channel gamma-6 subunit (260 aa).

Positions 14–33 (RRGAAGRRRAHGQGRSGLTP) are disordered. The span at 15-25 (RGAAGRRRAHG) shows a compositional bias: basic residues. 4 consecutive transmembrane segments (helical) span residues 43 to 63 (LLLA…EFWV), 143 to 163 (VIAV…IMVL), 169 to 189 (FLLR…LVSL), and 221 to 241 (LGCG…FLLL).

It belongs to the PMP-22/EMP/MP20 family. CACNG subfamily. As to quaternary structure, interacts with CACNA1C. Identified in a complex with the L-type calcium channel subunits CACNA1C, CACNA2D1 and either CACNB1 or CACNB2. Detected in heart left ventricle.

Its subcellular location is the cell membrane. In terms of biological role, regulates the activity of L-type calcium channels that contain CACNA1C as pore-forming subunit. The chain is Voltage-dependent calcium channel gamma-6 subunit (CACNG6) from Homo sapiens (Human).